The following is a 495-amino-acid chain: Putative aldehyde dehydrogenase AldA (495 aa).

NAD(+) is bound at residue 212–218 (GKGSESG). Catalysis depends on residues Glu256 and Cys290.

Belongs to the aldehyde dehydrogenase family.

It catalyses the reaction an aldehyde + NAD(+) + H2O = a carboxylate + NADH + 2 H(+). This is Putative aldehyde dehydrogenase AldA (aldA) from Staphylococcus aureus (strain MSSA476).